The sequence spans 111 residues: Nucleoid-associated protein NMCC_1355 (111 aa).

This sequence belongs to the YbaB/EbfC family. In terms of assembly, homodimer.

Its subcellular location is the cytoplasm. The protein resides in the nucleoid. In terms of biological role, binds to DNA and alters its conformation. May be involved in regulation of gene expression, nucleoid organization and DNA protection. This is Nucleoid-associated protein NMCC_1355 from Neisseria meningitidis serogroup C (strain 053442).